The chain runs to 102 residues: Large ribosomal subunit protein bL21 (102 aa).

This sequence belongs to the bacterial ribosomal protein bL21 family. Part of the 50S ribosomal subunit. Contacts protein L20.

In terms of biological role, this protein binds to 23S rRNA in the presence of protein L20. This is Large ribosomal subunit protein bL21 from Pediococcus pentosaceus (strain ATCC 25745 / CCUG 21536 / LMG 10740 / 183-1w).